The sequence spans 212 residues: FMN-dependent NADH:quinone oxidoreductase (212 aa).

FMN-binding positions include S10 and S17 to S19.

This sequence belongs to the azoreductase type 1 family. In terms of assembly, homodimer. Requires FMN as cofactor.

It carries out the reaction 2 a quinone + NADH + H(+) = 2 a 1,4-benzosemiquinone + NAD(+). The enzyme catalyses N,N-dimethyl-1,4-phenylenediamine + anthranilate + 2 NAD(+) = 2-(4-dimethylaminophenyl)diazenylbenzoate + 2 NADH + 2 H(+). Functionally, quinone reductase that provides resistance to thiol-specific stress caused by electrophilic quinones. In terms of biological role, also exhibits azoreductase activity. Catalyzes the reductive cleavage of the azo bond in aromatic azo compounds to the corresponding amines. This chain is FMN-dependent NADH:quinone oxidoreductase, found in Malacoplasma penetrans (strain HF-2) (Mycoplasma penetrans).